Reading from the N-terminus, the 149-residue chain is Squidulin (149 aa).

An N-acetylalanine modification is found at Ala1. EF-hand domains are found at residues 7 to 42, 43 to 78, 80 to 115, and 117 to 149; these read KQIA…LGRT, PSDA…QMGP, DPEK…FSDE, and LTSE…MTPK. Residues Asp20, Asp22, Asp24, Gln26, Glu31, Asp56, Asp58, Asn60, Thr62, Glu67, Asp93, Asp95, Asn97, Glu104, Asp130, Asp132, Asp134, Met136, and Glu141 each contribute to the Ca(2+) site.

This sequence belongs to the calmodulin family.

Functionally, not known. This protein has four functional calcium-binding sites. The sequence is that of Squidulin from Doryteuthis pealeii (Longfin inshore squid).